The sequence spans 196 residues: Small ribosomal subunit protein uS4c (196 aa).

The segment at 15–43 is disordered; the sequence is LGALPGLTRKTPKSGSNQKKKFHSGKKEQ. Positions 89 to 150 constitute an S4 RNA-binding domain; it reads MRLDNILFRL…NQRSKRLVQN (62 aa).

This sequence belongs to the universal ribosomal protein uS4 family. Part of the 30S ribosomal subunit. Contacts protein S5. The interaction surface between S4 and S5 is involved in control of translational fidelity.

The protein localises to the plastid. The protein resides in the chloroplast. Functionally, one of the primary rRNA binding proteins, it binds directly to 16S rRNA where it nucleates assembly of the body of the 30S subunit. With S5 and S12 plays an important role in translational accuracy. This chain is Small ribosomal subunit protein uS4c (rps4), found in Bothriochloa ischaemum (Yellow bluestem).